The chain runs to 70 residues: uncharacterized protein (70 aa).

This is an uncharacterized protein from Methanocaldococcus jannaschii (strain ATCC 43067 / DSM 2661 / JAL-1 / JCM 10045 / NBRC 100440) (Methanococcus jannaschii).